Reading from the N-terminus, the 330-residue chain is Palmitoyltransferase SWF1 (330 aa).

A helical membrane pass occupies residues 1–21; sequence MLLFLVFILVVSQVVLLLLSP. Residues 22-50 lie on the Cytoplasmic side of the membrane; the sequence is QFRDKFIFRWYYDEVYKPMILDNSRYRIK. Residues 51-71 traverse the membrane as a helical segment; it reads FYVVPVFYLSVYSYMVYIFYS. At 72–86 the chain is on the lumenal side; that stretch reads RTFAIISPMLTSIET. Residues 87-107 form a helical membrane-spanning segment; that stretch reads YVVIPLMLILPLFFGSMSMII. Residues 108–181 are Cytoplasmic-facing; sequence KPDSSNAHQI…GMGNYMYFYS (74 aa). The DHHC domain occupies 134–184; the sequence is HECRTCKQVKPARSKHCTVCNSCIYLADHHCVWINNCVGMGNYMYFYSFLC. The chain crosses the membrane as a helical span at residues 182–202; it reads FLCSNLLLLSYSFIRLIFIQF. At 203 to 218 the chain is on the lumenal side; it reads NKSAYNTTPTGEKSLL. The helical transmembrane segment at 219–239 threads the bilayer; it reads ILSILCGSFTVILAVYCYFVF. Topologically, residues 240-330 are cytoplasmic; it reads ELVNSGMTTN…FINNLREFIG (91 aa).

It belongs to the DHHC palmitoyltransferase family. SWF1 subfamily.

The protein resides in the endoplasmic reticulum membrane. The enzyme catalyses L-cysteinyl-[protein] + hexadecanoyl-CoA = S-hexadecanoyl-L-cysteinyl-[protein] + CoA. Functionally, palmitoyltransferase that targets several endosomal SNAREs. Palmitoylates the SNAREs at cysteine residues close to the cytoplasmic end of their transmembrane domain. May have a role in the cellular quality control of transmembrane domain-containing proteins. The protein is Palmitoyltransferase SWF1 (SWF1) of Candida glabrata (strain ATCC 2001 / BCRC 20586 / JCM 3761 / NBRC 0622 / NRRL Y-65 / CBS 138) (Yeast).